The sequence spans 465 residues: Polyadenylation factor subunit 2 (465 aa).

Over residues 1–20 the composition is skewed to low complexity; that stretch reads MDGHNQNQYQNQNQIQQSQQ. The disordered stretch occupies residues 1–26; the sequence is MDGHNQNQYQNQNQIQQSQQPPLKKY. WD repeat units lie at residues 133 to 163, 175 to 205, 217 to 247, 259 to 290, and 348 to 378; these read AHDS…KIWQ, AHTE…KIWN, GHHW…KLWD, KFKH…RVFD, and AHDK…RFWT. The tract at residues 417–465 is disordered; it reads EFGAAPPPPATLEPHALPNMNGFINKKPRQEIPGIDSNIKSSTLPGLSI. Positions 454-465 are enriched in polar residues; sequence NIKSSTLPGLSI.

Component of the cleavage and polyadenylation factor (CPF) complex, which is composed of at least PTI1, SYC1, SSU72, GLC7, MPE1, REF2, PFS2, PTA1, YSH1/BRR5, SWD2, CFT2/YDH1, YTH1, CFT1/YHH1, FIP1 and PAP1. Interacts with YSH1/BRR5, FIP1 and RNA14.

Its subcellular location is the nucleus. Integral and essential component of the cleavage and polyadenylation factor (CPF) complex, which plays a key role in polyadenylation-dependent pre-mRNA 3'-end formation and cooperates with cleavage factors including the CFIA complex and NAB4/CFIB. May bridge the CPF and CFIA complexes. The chain is Polyadenylation factor subunit 2 (PFS2) from Saccharomyces cerevisiae (strain ATCC 204508 / S288c) (Baker's yeast).